Reading from the N-terminus, the 216-residue chain is Urease accessory protein UreG (216 aa).

Position 25-32 (25-32) interacts with GTP; that stretch reads GPVGSGKT.

It belongs to the SIMIBI class G3E GTPase family. UreG subfamily. As to quaternary structure, homodimer. UreD, UreF and UreG form a complex that acts as a GTP-hydrolysis-dependent molecular chaperone, activating the urease apoprotein by helping to assemble the nickel containing metallocenter of UreC. The UreE protein probably delivers the nickel.

Its subcellular location is the cytoplasm. Facilitates the functional incorporation of the urease nickel metallocenter. This process requires GTP hydrolysis, probably effectuated by UreG. This is Urease accessory protein UreG from Burkholderia mallei (strain NCTC 10247).